The sequence spans 361 residues: Outer mitochondrial transmembrane helix translocase (361 aa).

Topologically, residues 1–15 are mitochondrial intermembrane; sequence MVHAEAFSRPLSRNE. Residues 16-32 form a helical membrane-spanning segment; it reads VVGLIFRLTIFGAVTYF. At 33–361 the chain is on the cytoplasmic side; the sequence is TIKWMVDAID…QNVLTHVCLD (329 aa). 133–140 lines the ATP pocket; the sequence is GPPGCGKT. The residue at position 322 (Ser322) is a Phosphoserine.

The protein belongs to the AAA ATPase family. MSP1 subfamily. As to quaternary structure, interacts with GRIA2 and GRIP1 in an ATP-dependent manner. ATAD1-catalyzed ATP hydrolysis disrupts not only its binding to GRIA2 and GRIP1, but also interaction between GRIP1 and GRIA2, leading to AMPAR complex disassembly.

The protein resides in the mitochondrion outer membrane. It is found in the peroxisome membrane. It localises to the postsynaptic cell membrane. It catalyses the reaction [protein]-with a C-terminal TM segment(out) + ATP + H2O = [protein]-with a C-terminal TM segment(in) + ADP + phosphate + H(+). In terms of biological role, outer mitochondrial translocase required to remove mislocalized tail-anchored transmembrane proteins on mitochondria. Specifically recognizes and binds tail-anchored transmembrane proteins: acts as a dislocase that mediates the ATP-dependent extraction of mistargeted tail-anchored transmembrane proteins from the mitochondrion outer membrane. Also plays a critical role in regulating the surface expression of AMPA receptors (AMPAR), thereby regulating synaptic plasticity and learning and memory. Required for NMDA-stimulated AMPAR internalization and inhibition of GRIA1 and GRIA2 recycling back to the plasma membrane; these activities are ATPase-dependent. This Homo sapiens (Human) protein is Outer mitochondrial transmembrane helix translocase.